Reading from the N-terminus, the 161-residue chain is Small ribosomal subunit protein uS19 (161 aa).

The segment covering 1–19 has biased composition (basic residues); sequence MARQKKYSGKGGARKKNKQ. Positions 1–26 are disordered; the sequence is MARQKKYSGKGGARKKNKQKQNVAPR.

It belongs to the universal ribosomal protein uS19 family.

Protein S19 forms a complex with S13 that binds strongly to the 16S ribosomal RNA. The sequence is that of Small ribosomal subunit protein uS19 from Methanococcus maripaludis (strain DSM 14266 / JCM 13030 / NBRC 101832 / S2 / LL).